A 216-amino-acid polypeptide reads, in one-letter code: Cytosolic-abundant heat soluble protein 2 (216 aa).

Residues 1–11 are compositionally biased toward polar residues; the sequence is MSRDQGSTEYD. 2 disordered regions span residues 1–34 and 66–91; these read MSRD…DVRT and RISG…KDRE. Basic and acidic residues predominate over residues 12 to 22; sequence ANQRQEQHQEQ. Composition is skewed to polar residues over residues 25-34 and 68-77; these read TSYTHTDVRT and SGQSSETHVQ. Residues 81-180 are a coiled coil; it reads EMEAEARKDR…ARLATQALDQ (100 aa). CAHS motif regions lie at residues 115-133 and 152-170; these read YRKQ…LEKQ and QKRQ…LDRE.

It belongs to the Cytosolic-abundant heat soluble protein (CAHS) family.

It localises to the cytoplasm. In terms of biological role, CAHS proteins are cytosolic heat soluble proteins that seem to contribute to the anhydrobiosis in tardigrades, but their specific mechanisms are yet to be identified. It is possible that protection during anhydrobiosis might occur via the stabilization of vitrifying small molecules such as sugars, but not via the direct glass transition of CAHS proteins themselves. This Ramazzottius varieornatus (Water bear) protein is Cytosolic-abundant heat soluble protein 2.